We begin with the raw amino-acid sequence, 272 residues long: AA9 family lytic polysaccharide monooxygenase G (272 aa).

Positions 1 to 22 are cleaved as a signal peptide; the sequence is MKGAGSASFLLTLLSTITRTSA. H23 is a Cu(2+) binding site. The N-linked (GlcNAc...) asparagine glycan is linked to N60. 2 cysteine pairs are disulfide-bonded: C78-C202 and C121-C125. H110 is a binding site for Cu(2+). 2 residues coordinate O2: H188 and Q197. Y199 contributes to the Cu(2+) binding site.

The protein belongs to the polysaccharide monooxygenase AA9 family. Cu(2+) is required as a cofactor.

The protein resides in the secreted. The enzyme catalyses [(1-&gt;4)-beta-D-glucosyl]n+m + reduced acceptor + O2 = 4-dehydro-beta-D-glucosyl-[(1-&gt;4)-beta-D-glucosyl]n-1 + [(1-&gt;4)-beta-D-glucosyl]m + acceptor + H2O.. In terms of biological role, lytic polysaccharide monooxygenase (LPMO) that depolymerizes crystalline and amorphous polysaccharides via the oxidation of scissile alpha- or beta-(1-4)-glycosidic bonds, yielding C1 or C4 oxidation products. Catalysis by LPMOs requires the reduction of the active-site copper from Cu(II) to Cu(I) by a reducing agent and H(2)O(2) or O(2) as a cosubstrate. Acts preferentially on crystalline regions of cellulose such as highly crystalline algae cellulose. This is AA9 family lytic polysaccharide monooxygenase G from Emericella nidulans (strain FGSC A4 / ATCC 38163 / CBS 112.46 / NRRL 194 / M139) (Aspergillus nidulans).